The chain runs to 114 residues: Chaperone protein YscY (114 aa).

In terms of assembly, binds to YscX.

The protein localises to the cytoplasm. Functionally, required for Yop secretion. Functions probably as a chaperone which stabilizes YscX within the cell, before its secretion. The protein is Chaperone protein YscY (yscY) of Yersinia enterocolitica.